Here is a 447-residue protein sequence, read N- to C-terminus: ATP-dependent protease ATPase subunit HslU (447 aa).

ATP is bound by residues Ile-17, 59–64, Asp-256, Glu-321, and Arg-393; that span reads GVGKTE.

Belongs to the ClpX chaperone family. HslU subfamily. In terms of assembly, a double ring-shaped homohexamer of HslV is capped on each side by a ring-shaped HslU homohexamer. The assembly of the HslU/HslV complex is dependent on binding of ATP.

The protein resides in the cytoplasm. ATPase subunit of a proteasome-like degradation complex; this subunit has chaperone activity. The binding of ATP and its subsequent hydrolysis by HslU are essential for unfolding of protein substrates subsequently hydrolyzed by HslV. HslU recognizes the N-terminal part of its protein substrates and unfolds these before they are guided to HslV for hydrolysis. The polypeptide is ATP-dependent protease ATPase subunit HslU (Pseudomonas entomophila (strain L48)).